The chain runs to 259 residues: UPF0246 protein PputGB1_4560 (259 aa).

It belongs to the UPF0246 family.

This is UPF0246 protein PputGB1_4560 from Pseudomonas putida (strain GB-1).